A 927-amino-acid polypeptide reads, in one-letter code: 2-oxoadipate dehydrogenase complex component E1 (927 aa).

The protein belongs to the alpha-ketoglutarate dehydrogenase family. In terms of assembly, the 2-oxoadipate dehydrogenase complex is composed of OADH (2-oxoadipate dehydrogenase; E1a), DLST (dihydrolipoamide succinyltransferase; E2) and DLD (dihydrolipoamide dehydrogenase; E3). E1a functional unit is a dimer. Requires thiamine diphosphate as cofactor.

The protein localises to the mitochondrion. The enzyme catalyses N(6)-[(R)-lipoyl]-L-lysyl-[protein] + 2-oxoadipate + H(+) = N(6)-[(R)-S(8)-glutaryldihydrolipoyl]-L-lysyl-[protein] + CO2. The protein operates within amino-acid degradation. Functionally, 2-oxoadipate dehydrogenase (E1a) component of the 2-oxoadipate dehydrogenase complex (OADHC). Participates in the first step, rate limiting for the overall conversion of 2-oxoadipate (alpha-ketoadipate) to glutaryl-CoA and CO(2) catalyzed by the whole OADHC. Catalyzes the irreversible decarboxylation of 2-oxoadipate via the thiamine diphosphate (ThDP) cofactor and subsequent transfer of the decarboxylated acyl intermediate on an oxidized dihydrolipoyl group that is covalently amidated to the E2 enzyme (dihydrolipoyllysine-residue succinyltransferase or DLST). Can catalyze the decarboxylation of 2-oxoglutarate in vitro, but at a much lower rate than 2-oxoadipate. Responsible for the last step of L-lysine, L-hydroxylysine and L-tryptophan catabolism with the common product being 2-oxoadipate. This Xenopus laevis (African clawed frog) protein is 2-oxoadipate dehydrogenase complex component E1 (dhtkd1).